A 162-amino-acid chain; its full sequence is V-type proton ATPase subunit c' (162 aa).

Residues 1 to 11 are Lumenal-facing; it reads MSSNLCPIYSS. Residues 12 to 32 form a helical membrane-spanning segment; that stretch reads FFGFAGVCASMVFSCLGAGYG. At 33 to 54 the chain is on the cytoplasmic side; the sequence is TALAGRGIAAVGAFRPEIVMKS. The helical transmembrane segment at 55–75 threads the bilayer; the sequence is LIPVVMSGIIGVYGLVMSVLI. Residues 76 to 93 are Lumenal-facing; sequence AGDMSPDNDYSLFSGFIH. A helical membrane pass occupies residues 94-114; it reads LSAGLAVGLTGVAAGYAIGVV. Residues 115–132 lie on the Cytoplasmic side of the membrane; the sequence is GDRGVQSFMRQDRIFVSM. Residues 133 to 153 traverse the membrane as a helical segment; sequence VLILIFAEVLGLYGLIVGLIL. Residues 154-162 lie on the Lumenal side of the membrane; it reads QTKTSNVCY.

It belongs to the V-ATPase proteolipid subunit family. In terms of assembly, V-ATPase is a heteromultimeric enzyme composed of a peripheral catalytic V1 complex (components A to H) attached to an integral membrane V0 proton pore complex (components: a, c, c', c'', d, e, f and VOA1). The decameric c-ring forms the proton-conducting pore, and is composed of eight proteolipid subunits c, one subunit c' and one subunit c''.

It localises to the vacuole membrane. Proton-conducting pore forming subunit of the V0 complex of vacuolar(H+)-ATPase (V-ATPase), a multisubunit enzyme composed of a peripheral complex (V1) that hydrolyzes ATP and a membrane integral complex (V0) that translocates protons. V-ATPase is responsible for acidifying and maintaining the pH of intracellular compartments. This is V-type proton ATPase subunit c' from Schizosaccharomyces pombe (strain 972 / ATCC 24843) (Fission yeast).